The following is a 99-amino-acid chain: SAGA-associated factor 11 (99 aa).

The SGF11-type zinc-finger motif lies at 71-92; the sequence is FYCENCGREVSGNRFAAHLQRC.

It belongs to the SGF11 family. Component of the 1.8 MDa SAGA transcription coactivator-HAT complex. SAGA is built of 5 distinct domains with specialized functions. Within the SAGA complex, SUS1, SGF11, SGF73 and UBP8 form an additional subcomplex of SAGA called the DUB module (deubiquitination module). Interacts directly with SGF73, SUS1 and UBP8.

It is found in the nucleus. In terms of biological role, functions as a component of the transcription regulatory histone acetylation (HAT) complex SAGA. At the promoters, SAGA is required for recruitment of the basal transcription machinery. It influences RNA polymerase II transcriptional activity through different activities such as TBP interaction and promoter selectivity, interaction with transcription activators, and chromatin modification through histone acetylation and deubiquitination. SAGA acetylates nucleosomal histone H3 to some extent (to form H3K9ac, H3K14ac, H3K18ac and H3K23ac). SAGA interacts with DNA via upstream activating sequences (UASs). Involved in transcriptional regulation of a subset of SAGA-regulated genes. Within the SAGA complex, participates in a subcomplex, that specifically deubiquitinates histones H2B. The protein is SAGA-associated factor 11 of Candida glabrata (strain ATCC 2001 / BCRC 20586 / JCM 3761 / NBRC 0622 / NRRL Y-65 / CBS 138) (Yeast).